The chain runs to 382 residues: Pyrimidine monooxygenase RutA (382 aa).

FMN contacts are provided by residues 68-69, N134, E143, 159-160, and S209; these read IK and RY.

Belongs to the NtaA/SnaA/DszA monooxygenase family. RutA subfamily.

The enzyme catalyses uracil + FMNH2 + NADH + O2 = (Z)-3-ureidoacrylate + FMN + NAD(+) + H2O + H(+). It catalyses the reaction thymine + FMNH2 + NADH + O2 = (Z)-2-methylureidoacrylate + FMN + NAD(+) + H2O + H(+). In terms of biological role, catalyzes the pyrimidine ring opening between N-3 and C-4 by an unusual flavin hydroperoxide-catalyzed mechanism, adding oxygen atoms in the process to yield ureidoacrylate peracid, that immediately reacts with FMN forming ureidoacrylate and FMN-N(5)-oxide. The FMN-N(5)-oxide reacts spontaneously with NADH to produce FMN. Requires the flavin reductase RutF to regenerate FMN in vivo. This chain is Pyrimidine monooxygenase RutA, found in Escherichia coli (strain SE11).